We begin with the raw amino-acid sequence, 328 residues long: D-cysteine desulfhydrase (328 aa).

Lysine 51 is modified (N6-(pyridoxal phosphate)lysine).

Belongs to the ACC deaminase/D-cysteine desulfhydrase family. In terms of assembly, homodimer. Pyridoxal 5'-phosphate serves as cofactor.

It catalyses the reaction D-cysteine + H2O = hydrogen sulfide + pyruvate + NH4(+) + H(+). Its function is as follows. Catalyzes the alpha,beta-elimination reaction of D-cysteine and of several D-cysteine derivatives. It could be a defense mechanism against D-cysteine. The polypeptide is D-cysteine desulfhydrase (Escherichia coli O7:K1 (strain IAI39 / ExPEC)).